The primary structure comprises 166 residues: UPF0260 protein GbCGDNIH1_2046 (166 aa).

Positions 147-166 (RFPRPRRPRQEPAGKTADES) are disordered. Basic and acidic residues predominate over residues 154-166 (PRQEPAGKTADES).

Belongs to the UPF0260 family.

This is UPF0260 protein GbCGDNIH1_2046 from Granulibacter bethesdensis (strain ATCC BAA-1260 / CGDNIH1).